Reading from the N-terminus, the 387-residue chain is Alkanesulfonate monooxygenase (387 aa).

It belongs to the SsuD family.

It catalyses the reaction an alkanesulfonate + FMNH2 + O2 = an aldehyde + FMN + sulfite + H2O + 2 H(+). Its function is as follows. Catalyzes the desulfonation of aliphatic sulfonates. The protein is Alkanesulfonate monooxygenase of Ralstonia nicotianae (strain ATCC BAA-1114 / GMI1000) (Ralstonia solanacearum).